The following is a 1642-amino-acid chain: Cholesterol transporter ABCA5 (1642 aa).

The helical transmembrane segment at 32–52 (SVQEILFPLFFLFWLILVSMM) threads the bilayer. The N-linked (GlcNAc...) asparagine glycan is linked to Asn-86. The next 5 membrane-spanning stretches (helical) occupy residues 220–240 (VILI…AIHI), 264–284 (LSWV…MAVI), 297–317 (IVIF…ALML), 328–348 (GVVE…IVLI), and 355–375 (LVWL…AQVM). A glycan (N-linked (GlcNAc...) asparagine) is linked at Asn-388. Residues 396-416 (LIITIIMLALDSVFYVLLAVY) traverse the membrane as a helical segment. N-linked (GlcNAc...) asparagine glycosylation occurs at Asn-458. One can recognise an ABC transporter 1 domain in the interval 478-713 (IRISGIQKSY…WGIGYRLSMY (236 aa)). An ATP-binding site is contributed by 514 to 521 (GHSGTGKS). Residues 864–884 (AVLLLLLIFFAVQIFMFFLHH) traverse the membrane as a helical segment. Asn-919 carries N-linked (GlcNAc...) asparagine glycosylation. The chain crosses the membrane as a helical span at residues 967 to 987 (VFSAVFNSTMVYCLPVMMNII). Asn-996 carries N-linked (GlcNAc...) asparagine glycosylation. A run of 6 helical transmembrane segments spans residues 1021-1041 (LYFQ…YFAM), 1071-1091 (VVDI…LFAF), 1102-1122 (FLAV…FTYI), 1138-1158 (SFIY…TFFL), 1164-1184 (AVFH…GCLI), and 1207-1227 (LLVA…LLQH). The ABC transporter 2 domain occupies 1290-1533 (IMVCNLHKEY…FGKGYFLEIK (244 aa)). 1333–1340 (GPNGAGKS) is a binding site for ATP.

Belongs to the ABC transporter superfamily. ABCA family. N-glycosylated. In terms of tissue distribution, expressed in cardiomyocytes, oligodendrocytes and astrocytes in brain, alveolar type 2 cells in lung and follicular cells in the thyroid gland (at protein level). Detected in brain, testis, lung, heart, liver, kidney, skeletal muscle and placenta. Strongly expressed in the basal cells of the seminiferous tubules, interstitial cells consisting of Leydig cells, as well as the tunica albuginea. In the epididymis, specifically and very strongly expressed in the connective tissue outlining the cylindrical epithelium in the corpus and cauda regions, including fibrocytes and smooth muscle cells, as well as within the basal and tall columnar cells of the corpus cylindrical epithelium. Highly expressed in the brain with high expression in cortical and hippocampal neurons and moderately in the lung.

Its subcellular location is the golgi apparatus membrane. The protein resides in the lysosome membrane. It is found in the late endosome membrane. The protein localises to the cell membrane. The catalysed reaction is cholesterol(in) + ATP + H2O = cholesterol(out) + ADP + phosphate + H(+). Cholesterol efflux transporter in macrophages that is responsible for APOAI/high-density lipoproteins (HDL) formation at the plasma membrane under high cholesterol levels and participates in reverse cholesterol transport. May play a role in the processing of autolysosomes. The chain is Cholesterol transporter ABCA5 from Mus musculus (Mouse).